A 466-amino-acid polypeptide reads, in one-letter code: Argininosuccinate lyase (466 aa).

Belongs to the lyase 1 family. Argininosuccinate lyase subfamily.

The protein localises to the cytoplasm. The catalysed reaction is 2-(N(omega)-L-arginino)succinate = fumarate + L-arginine. It functions in the pathway amino-acid biosynthesis; L-arginine biosynthesis; L-arginine from L-ornithine and carbamoyl phosphate: step 3/3. The sequence is that of Argininosuccinate lyase from Methylocella silvestris (strain DSM 15510 / CIP 108128 / LMG 27833 / NCIMB 13906 / BL2).